A 904-amino-acid polypeptide reads, in one-letter code: Thiamine diphosphate dependent-3-acetyloctanal synthase PigD (904 aa).

Residues 879 to 904 (RKAWAAQQPESTSTAFDQDPTQEATS) form a disordered region. Residues 886-904 (QPESTSTAFDQDPTQEATS) show a composition bias toward polar residues.

This sequence belongs to the TPP enzyme family. The cofactor is thiamine diphosphate.

It catalyses the reaction (2E)-octenal + pyruvate + H(+) = (S)-3-acetyloctanal + CO2. It functions in the pathway antibiotic biosynthesis; prodigiosin biosynthesis. In terms of biological role, involved in the biosynthesis of 2-methyl-3-n-amyl-pyrrole (MAP), one of the terminal products involved in the biosynthesis of the red antibiotic prodigiosin (Pig). Catalyzes the decarboxylation of pyruvate, followed by the modification of the resulting two-carbon fragment acetaldehyde at the C3 position of the 2-octenal (1,2-addition of acetaldehyde) giving 3-acetyloctanal. In vitro, it can act on a number of alpha,beta-unsaturated carbonyl compounds, including aldehydes and ketones, and can catalyze both 1,2-addition and Stetter-type 1,4-addition depending on the substrate. The sequence is that of Thiamine diphosphate dependent-3-acetyloctanal synthase PigD from Serratia marcescens.